The sequence spans 339 residues: Glycerol-3-phosphate dehydrogenase [NAD(P)+] (339 aa).

4 residues coordinate NADPH: serine 31, tryptophan 32, arginine 52, and lysine 122. Sn-glycerol 3-phosphate is bound by residues lysine 122 and glycine 152. Alanine 156 provides a ligand contact to NADPH. Residues lysine 207, aspartate 260, serine 270, arginine 271, and asparagine 272 each coordinate sn-glycerol 3-phosphate. The active-site Proton acceptor is lysine 207. Arginine 271 is a binding site for NADPH. Residue glutamate 293 coordinates NADPH.

It belongs to the NAD-dependent glycerol-3-phosphate dehydrogenase family.

The protein localises to the cytoplasm. The catalysed reaction is sn-glycerol 3-phosphate + NAD(+) = dihydroxyacetone phosphate + NADH + H(+). It catalyses the reaction sn-glycerol 3-phosphate + NADP(+) = dihydroxyacetone phosphate + NADPH + H(+). It participates in membrane lipid metabolism; glycerophospholipid metabolism. In terms of biological role, catalyzes the reduction of the glycolytic intermediate dihydroxyacetone phosphate (DHAP) to sn-glycerol 3-phosphate (G3P), the key precursor for phospholipid synthesis. This chain is Glycerol-3-phosphate dehydrogenase [NAD(P)+], found in Tropheryma whipplei (strain Twist) (Whipple's bacillus).